The primary structure comprises 946 residues: MKRLTCFFICFFLSEVSGFEIPINGLSEFVDYEDLVELAPGKFQLVAENRRYQRSLPGESEEMMEEVDQVTLYSYKVQSTITSRMATTMIQSKVVNNSPQPQNVVFDVQIPKGAFISNFSMTVDGKTFRSSIKEKTVGRALYAQARAKGKTAGLVRSSALDMENFRTEVNVLPGAKVQFELHYQEVKWRKLGSYEHRIYLQPGRLAKHLEVDVWVIEPQGLRFLHVPDTFEGHFDGVPVISKGQQKAHVSFKPTVAQQRICPNCRETAVDGELVVLYDVKREEKAGELEVFNGYFVHFFAPDNLDPIPKNILFVIDVSGSMWGVKMKQTVEAMKTILDDLRAEDHFSVIDFNQNIRTWRNDLISATKTQVADAKRYIEKIQPSGGTNINEALLRAIFILNEANNLGLLDPNSVSLIILVSDGDPTVGELKLSKIQKNVKENIQDNISLFSLGMGFDVDYDFLKRLSNENHGIAQRIYGNQDTSSQLKKFYNQVSTPLLRNVQFNYPHTSVTDVTQNNFHNYFGGSEIVVAGKFDPAKLDQIESVITATSANTQLVLETLAQMDDLQDFLSKDKHADPDFTRKLWAYLTINQLLAERSLAPTAAAKRRITRSILQMSLDHHIVTPLTSLVIENEAGDERMLADAPPQDPSCCSGALYYGSKVVPDSTPSWANPSPTPVISMLAQGSQVLESTPPPHVMRVENDPHFIIYLPKSQKNICFNIDSEPGKILNLVSDPESGIVVNGQLVGAKKPNNGKLSTYFGKLGFYFQSEDIKIEISTETITLSHGSSTFSLSWSDTAQVTNQRVQISVKKEKVVTITLDKEMSFSVLLHRVWKKHPVNVDFLGIYIPPTNKFSPKAHGLIGQFMQEPKIHIFNERPGKDPEKPEASMEVKGQKLIITRGLQKDYRTDLVFGTDVTCWFVHNSGKGFIDGHYKDYFVPQLYSFLKRP.

A signal peptide spans 1–18 (MKRLTCFFICFFLSEVSG). Positions 19–54 (FEIPINGLSEFVDYEDLVELAPGKFQLVAENRRYQR) are excised as a propeptide. The VIT domain maps to 56-185 (LPGESEEMME…KVQFELHYQE (130 aa)). At Ser60 the chain carries Phosphoserine; by FAM20C. An N-linked (GlcNAc...) (complex) asparagine glycan is attached at Asn118. Cys261 and Cys264 form a disulfide bridge. A 4-carboxyglutamate mark is found at Glu282 and Glu283. The 161-residue stretch at 308–468 (PKNILFVIDV…YDFLKRLSNE (161 aa)) folds into the VWFA domain. The N-linked (GlcNAc...) asparagine glycan is linked to Asn445. Position 466 is a phosphoserine; by FAM20C (Ser466). Cys650 and Cys651 are oxidised to a cystine. The segment at 665–679 (STPSWANPSPTPVIS) is O-glycosylated at three sites. Residue Thr666 is glycosylated (O-linked (GalNAc...) threonine; partial). Ser673 carries an O-linked (GalNAc...) serine glycan. 2 O-linked (GalNAc...) threonine glycosylation sites follow: Thr675 and Thr691. Asp702 carries the post-translational modification Aspartate 1-(chondroitin 4-sulfate)-ester. A propeptide spanning residues 703 to 946 (PHFIIYLPKS…PQLYSFLKRP (244 aa)) is cleaved from the precursor. At Ser886 the chain carries Phosphoserine; by FAM20C.

In terms of assembly, I-alpha-I plasma protease inhibitors are assembled from one or two heavy chains (HC) and one light chain, bikunin. Inter-alpha-inhibitor (I-alpha-I) is composed of ITIH1/HC1, ITIH2/HC2 and bikunin. In terms of processing, heavy chains are linked to bikunin via chondroitin 4-sulfate esterified to the alpha-carboxyl of the C-terminal aspartate after propeptide cleavage. N- and O-glycosylated. O-glycosylated with core 1 or possibly core 8 glycans. Post-translationally, phosphorylated by FAM20C in the extracellular medium. Plasma.

The protein resides in the secreted. Its function is as follows. May act as a carrier of hyaluronan in serum or as a binding protein between hyaluronan and other matrix protein, including those on cell surfaces in tissues to regulate the localization, synthesis and degradation of hyaluronan which are essential to cells undergoing biological processes. This chain is Inter-alpha-trypsin inhibitor heavy chain H2 (ITIH2), found in Homo sapiens (Human).